The chain runs to 188 residues: RxLR effector protein Avh241 (188 aa).

Residues 1–16 (MRQYCLLLIVLALAAA) form the signal peptide. Positions 43 to 58 (RLLRSEPQDEDTFEDR) match the RxLR-dEER motif. Positions 73 to 78 (GAAKAK) match the Host plasma membrane localization motif motif.

The protein belongs to the RxLR effector family.

The protein resides in the secreted. It localises to the host cell membrane. In terms of biological role, effector that triggers cell death in a variety of plant species (including tobacco, tomato and soybean), regardless of the Rps genes present. Avh241 interacts with the plant immune system via at least two different mechanisms, one recognized by plants dependent on subcellular localization and one promoting infection independent on membrane localization. The cell death triggered by Avh241 in N.benthamiana requires the two host mitogen-activated protein kinases, MEK2 and WIPK. In Phytophthora sojae (strain P6497) (Soybean stem and root rot agent), this protein is RxLR effector protein Avh241.